Here is a 153-residue protein sequence, read N- to C-terminus: Interleukin-2 (153 aa).

The first 20 residues, 1–20, serve as a signal peptide directing secretion; sequence MYRMQLLSCIALSLALVTNS. O-linked (GalNAc...) threonine glycosylation is present at T23. Cysteines 78 and 125 form a disulfide.

Belongs to the IL-2 family.

It localises to the secreted. Functionally, cytokine produced by activated CD4-positive helper T-cells and to a lesser extend activated CD8-positive T-cells and natural killer (NK) cells that plays pivotal roles in the immune response and tolerance. Binds to a receptor complex composed of either the high-affinity trimeric IL-2R (IL2RA/CD25, IL2RB/CD122 and IL2RG/CD132) or the low-affinity dimeric IL-2R (IL2RB and IL2RG). Interaction with the receptor leads to oligomerization and conformation changes in the IL-2R subunits resulting in downstream signaling starting with phosphorylation of JAK1 and JAK3. In turn, JAK1 and JAK3 phosphorylate the receptor to form a docking site leading to the phosphorylation of several substrates including STAT5. This process leads to activation of several pathways including STAT, phosphoinositide-3-kinase/PI3K and mitogen-activated protein kinase/MAPK pathways. Functions as a T-cell growth factor and can increase NK-cell cytolytic activity as well. Promotes strong proliferation of activated B-cells and subsequently immunoglobulin production. Plays a pivotal role in regulating the adaptive immune system by controlling the survival and proliferation of regulatory T-cells, which are required for the maintenance of immune tolerance. Moreover, participates in the differentiation and homeostasis of effector T-cell subsets, including Th1, Th2, Th17 as well as memory CD8-positive T-cells. In Homo sapiens (Human), this protein is Interleukin-2 (IL2).